The following is a 372-amino-acid chain: 4-hydroxy-3-methylbut-2-en-1-yl diphosphate synthase (flavodoxin) (372 aa).

[4Fe-4S] cluster contacts are provided by Cys-270, Cys-273, Cys-305, and Glu-312.

It belongs to the IspG family. Requires [4Fe-4S] cluster as cofactor.

It carries out the reaction (2E)-4-hydroxy-3-methylbut-2-enyl diphosphate + oxidized [flavodoxin] + H2O + 2 H(+) = 2-C-methyl-D-erythritol 2,4-cyclic diphosphate + reduced [flavodoxin]. It participates in isoprenoid biosynthesis; isopentenyl diphosphate biosynthesis via DXP pathway; isopentenyl diphosphate from 1-deoxy-D-xylulose 5-phosphate: step 5/6. Its function is as follows. Converts 2C-methyl-D-erythritol 2,4-cyclodiphosphate (ME-2,4cPP) into 1-hydroxy-2-methyl-2-(E)-butenyl 4-diphosphate. This is 4-hydroxy-3-methylbut-2-en-1-yl diphosphate synthase (flavodoxin) from Salmonella gallinarum (strain 287/91 / NCTC 13346).